A 94-amino-acid chain; its full sequence is Small ribosomal subunit protein uS19 (94 aa).

This sequence belongs to the universal ribosomal protein uS19 family.

Its function is as follows. Protein S19 forms a complex with S13 that binds strongly to the 16S ribosomal RNA. The polypeptide is Small ribosomal subunit protein uS19 (Pelotomaculum thermopropionicum (strain DSM 13744 / JCM 10971 / SI)).